Here is a 243-residue protein sequence, read N- to C-terminus: Probable transcriptional regulatory protein BAPKO_0024/BafPKo_0025 (243 aa).

This sequence belongs to the TACO1 family.

Its subcellular location is the cytoplasm. This Borreliella afzelii (strain PKo) (Borrelia afzelii) protein is Probable transcriptional regulatory protein BAPKO_0024/BafPKo_0025.